The sequence spans 407 residues: DNA primase DnaG (407 aa).

A Toprim domain is found at 172-248; it reads DWIIVVEGRA…HIDYVARAPP (77 aa). The Mg(2+) site is built by glutamate 178, aspartate 222, and aspartate 224. A disordered region spans residues 279–304; the sequence is AGAEKTEAAAPPPQQPTAPPAAPSQQ. A compositionally biased stretch (pro residues) spans 288–300; that stretch reads APPPQQPTAPPAA.

This sequence belongs to the archaeal DnaG primase family. As to quaternary structure, forms a ternary complex with MCM helicase and DNA. Component of the archaeal exosome complex. The cofactor is Mg(2+).

The enzyme catalyses ssDNA + n NTP = ssDNA/pppN(pN)n-1 hybrid + (n-1) diphosphate.. RNA polymerase that catalyzes the synthesis of short RNA molecules used as primers for DNA polymerase during DNA replication. Also part of the exosome, which is a complex involved in RNA degradation. Acts as a poly(A)-binding protein that enhances the interaction between heteromeric, adenine-rich transcripts and the exosome. This is DNA primase DnaG from Pyrobaculum calidifontis (strain DSM 21063 / JCM 11548 / VA1).